We begin with the raw amino-acid sequence, 124 residues long: Bactoprenol-linked glucose translocase (124 aa).

4 consecutive transmembrane segments (helical) span residues 12 to 32 (FFSYFLIGIVNTALHWGVFYA), 45 to 65 (NIVGFICAATFSFFANARCSF), 75 to 95 (FIFIFFMGAMSYLFGVLFDLL), and 96 to 116 (ALSPIFTLFTFSLFSLVLGYC).

The protein belongs to the GtrA family.

Its subcellular location is the cell membrane. Its pathway is bacterial outer membrane biogenesis; lipopolysaccharide biosynthesis. Involved in O antigen modification. Involved in the translocation of bactoprenol-linked glucose across the cytoplasmic membrane. In Shigella flexneri, this protein is Bactoprenol-linked glucose translocase (rfbI).